The sequence spans 181 residues: MICGIDEVGRGCIFGPVLSAAVIFKSKPNFLNELDDSKKLTKTKREYLSALILENAYYAFADISNEIIDKINIHNASLLAMQIAYQKLNIECNLVLVDGKFIPKIQAKQIRAIIKGDSMIDEIKAASIIAKVQRDKLMVEYDKIYPLYGLKKNKGYPTKEHKDAIKKHGILSLHRKSFQLI.

An RNase H type-2 domain is found at 1–181 (MICGIDEVGR…SLHRKSFQLI (181 aa)). 3 residues coordinate a divalent metal cation: Asp6, Glu7, and Asp98.

It belongs to the RNase HII family. The cofactor is Mn(2+). Requires Mg(2+) as cofactor.

The protein localises to the cytoplasm. It carries out the reaction Endonucleolytic cleavage to 5'-phosphomonoester.. Functionally, endonuclease that specifically degrades the RNA of RNA-DNA hybrids. The protein is Ribonuclease HII of Borrelia duttonii (strain Ly).